A 686-amino-acid chain; its full sequence is Pheromone-processing carboxypeptidase KEX1 (686 aa).

The signal sequence occupies residues 1-19 (MKFLLPTFIIFIYTLLVSA). The Lumenal portion of the chain corresponds to 20 to 543 (LPTKEGSDPK…SDSTSSKFTR (524 aa)). 2 N-linked (GlcNAc...) asparagine glycosylation sites follow: Asn-85 and Asn-122. Active-site residues include Ser-184 and Asp-394. N-linked (GlcNAc...) asparagine glycans are attached at residues Asn-441 and Asn-449. The active site involves His-452. Residues 489–519 (LGSRKENDESKNPVESPSQTIDPIISSSSSS) form a disordered region. Positions 491–500 (SRKENDESKN) are enriched in basic and acidic residues. Over residues 504-519 (SPSQTIDPIISSSSSS) the composition is skewed to low complexity. A helical membrane pass occupies residues 544 to 564 (LIQLAVILVIFWGVYVLYASY). Over 565–686 (KSRPSSIIKK…SDPATHKSVS (122 aa)) the chain is Cytoplasmic. 2 disordered regions span residues 570-590 (SIIK…TGKK) and 627-686 (KDTR…KSVS). A compositionally biased stretch (low complexity) spans 576 to 586 (TNNTSNITRSS). Composition is skewed to basic and acidic residues over residues 627–641 (KDTR…REND) and 674–686 (QPRS…KSVS).

It belongs to the peptidase S10 family.

The protein localises to the golgi apparatus. Its subcellular location is the trans-Golgi network membrane. The catalysed reaction is Preferential release of a C-terminal arginine or lysine residue.. Its function is as follows. Protease with a carboxypeptidase B-like function involved in the C-terminal processing of the lysine and arginine residues from protein precursors. Promotes cell fusion and is involved in the programmed cell death. This Candida dubliniensis (strain CD36 / ATCC MYA-646 / CBS 7987 / NCPF 3949 / NRRL Y-17841) (Yeast) protein is Pheromone-processing carboxypeptidase KEX1 (KEX1).